A 307-amino-acid polypeptide reads, in one-letter code: Epimerase family protein ML0860 (307 aa).

It belongs to the NAD(P)-dependent epimerase/dehydratase family. SDR39U1 subfamily.

This is Epimerase family protein ML0860 from Mycobacterium leprae (strain TN).